A 184-amino-acid chain; its full sequence is Putative axial regulator YABBY 2 (184 aa).

The segment at 15-42 adopts a C4-type zinc-finger fold; it reads CSFCTTILAVSVPYASLFTLVTVRCGHC. 2 stretches are compositionally biased toward polar residues: residues 76–94 and 171–184; these read LVTR…NLSE and LDQS…NGYY. Disordered regions lie at residues 76-115 and 162-184; these read LVTR…RQRV and LDGN…NGYY.

Belongs to the YABBY family. In terms of assembly, interacts with SPL/NZZ and SPEAR2. In terms of tissue distribution, expressed at low levels in abaxial regions of lateral aerial organ primordia leading to cotyledons, leaves, flower meristems, sepals, petals, stamen and carpels, but not in roots.

The protein resides in the nucleus. In terms of biological role, involved in the abaxial cell fate determination during embryogenesis and organogenesis. In Arabidopsis thaliana (Mouse-ear cress), this protein is Putative axial regulator YABBY 2 (YAB2).